The following is a 137-amino-acid chain: Holo-[acyl-carrier-protein] synthase (137 aa).

2 residues coordinate Mg(2+): Asp8 and Glu57.

It belongs to the P-Pant transferase superfamily. AcpS family. Requires Mg(2+) as cofactor.

It is found in the cytoplasm. The enzyme catalyses apo-[ACP] + CoA = holo-[ACP] + adenosine 3',5'-bisphosphate + H(+). Transfers the 4'-phosphopantetheine moiety from coenzyme A to a Ser of acyl-carrier-protein. This Cereibacter sphaeroides (strain ATCC 17023 / DSM 158 / JCM 6121 / CCUG 31486 / LMG 2827 / NBRC 12203 / NCIMB 8253 / ATH 2.4.1.) (Rhodobacter sphaeroides) protein is Holo-[acyl-carrier-protein] synthase.